The chain runs to 142 residues: MAP3K7 C-terminal-like protein (142 aa).

Detected in lung and peripheral blood leukocytes. Expressed predominantly in peripheral blood leukocytes and ubiquitously in adult and fetal tissues. Also expressed strongly in breast carcinoma GI-101, colon adenocarcinoma GI-112, and prostatic adenocarcinoma PC3.

This is MAP3K7 C-terminal-like protein (MAP3K7CL) from Homo sapiens (Human).